Here is a 321-residue protein sequence, read N- to C-terminus: Annexin D3 (321 aa).

Residue Ala-2 is modified to N-acetylalanine. Annexin repeat units lie at residues 11-82 (PSPA…SWTY), 83-159 (DPAE…TLAS), 171-243 (EVAT…VAIF), and 247-318 (TPEK…TLLG). Positions 26, 28, and 68 each coordinate Ca(2+). Thr-117 is subject to Phosphothreonine. Ile-260 and Gly-264 together coordinate Ca(2+). A Phosphotyrosine modification is found at Tyr-289. Ca(2+) is bound at residue Asp-304.

The protein belongs to the annexin (TC 1.A.31.1) family. Expressed mainly in roots and flowers. Lower in stems and leaves.

In Arabidopsis thaliana (Mouse-ear cress), this protein is Annexin D3 (ANN3).